The sequence spans 385 residues: Succinate--CoA ligase [ADP-forming] subunit beta (385 aa).

Residues 9 to 244 (KEILRKYGVP…QDEEDPLETR (236 aa)) form the ATP-grasp domain. ATP contacts are provided by residues Lys46, 53–55 (GRG), Glu99, Cys102, and Glu107. The Mg(2+) site is built by Asn199 and Asp213. Substrate contacts are provided by residues Asn264 and 321-323 (GIM).

The protein belongs to the succinate/malate CoA ligase beta subunit family. As to quaternary structure, heterotetramer of two alpha and two beta subunits. Mg(2+) serves as cofactor.

It catalyses the reaction succinate + ATP + CoA = succinyl-CoA + ADP + phosphate. It carries out the reaction GTP + succinate + CoA = succinyl-CoA + GDP + phosphate. It participates in carbohydrate metabolism; tricarboxylic acid cycle; succinate from succinyl-CoA (ligase route): step 1/1. Succinyl-CoA synthetase functions in the citric acid cycle (TCA), coupling the hydrolysis of succinyl-CoA to the synthesis of either ATP or GTP and thus represents the only step of substrate-level phosphorylation in the TCA. The beta subunit provides nucleotide specificity of the enzyme and binds the substrate succinate, while the binding sites for coenzyme A and phosphate are found in the alpha subunit. In Rickettsia bellii (strain OSU 85-389), this protein is Succinate--CoA ligase [ADP-forming] subunit beta.